A 393-amino-acid polypeptide reads, in one-letter code: NAD(P)H-quinone oxidoreductase subunit H, chloroplastic (393 aa).

Belongs to the complex I 49 kDa subunit family. As to quaternary structure, NDH is composed of at least 16 different subunits, 5 of which are encoded in the nucleus.

It is found in the plastid. The protein resides in the chloroplast thylakoid membrane. The catalysed reaction is a plastoquinone + NADH + (n+1) H(+)(in) = a plastoquinol + NAD(+) + n H(+)(out). The enzyme catalyses a plastoquinone + NADPH + (n+1) H(+)(in) = a plastoquinol + NADP(+) + n H(+)(out). NDH shuttles electrons from NAD(P)H:plastoquinone, via FMN and iron-sulfur (Fe-S) centers, to quinones in the photosynthetic chain and possibly in a chloroplast respiratory chain. The immediate electron acceptor for the enzyme in this species is believed to be plastoquinone. Couples the redox reaction to proton translocation, and thus conserves the redox energy in a proton gradient. The chain is NAD(P)H-quinone oxidoreductase subunit H, chloroplastic from Nicotiana tomentosiformis (Tobacco).